The sequence spans 216 residues: ATP phosphoribosyltransferase (216 aa).

The protein belongs to the ATP phosphoribosyltransferase family. Short subfamily. In terms of assembly, heteromultimer composed of HisG and HisZ subunits.

Its subcellular location is the cytoplasm. The enzyme catalyses 1-(5-phospho-beta-D-ribosyl)-ATP + diphosphate = 5-phospho-alpha-D-ribose 1-diphosphate + ATP. Its pathway is amino-acid biosynthesis; L-histidine biosynthesis; L-histidine from 5-phospho-alpha-D-ribose 1-diphosphate: step 1/9. Functionally, catalyzes the condensation of ATP and 5-phosphoribose 1-diphosphate to form N'-(5'-phosphoribosyl)-ATP (PR-ATP). Has a crucial role in the pathway because the rate of histidine biosynthesis seems to be controlled primarily by regulation of HisG enzymatic activity. This chain is ATP phosphoribosyltransferase, found in Nitrosomonas europaea (strain ATCC 19718 / CIP 103999 / KCTC 2705 / NBRC 14298).